The chain runs to 258 residues: Glucanase inhibitor protein 1 (258 aa).

The first 19 residues, 1–19 (MRVVPTLAAASLALGAVAG), serve as a signal peptide directing secretion. In terms of domain architecture, Peptidase S1 spans 27–254 (ILGGGEVPIG…AIEWITSVTK (228 aa)). Cys54 and Cys70 are oxidised to a cystine. Residues Asn87, Asn102, Asn107, Asn157, and Asn185 are each glycosylated (N-linked (GlcNAc...) asparagine). Cystine bridges form between Cys177–Cys189 and Cys199–Cys230.

It belongs to the peptidase S1 family. Forms an apoplastic complex with host endoglucanases in tomato leaves during P.infestans infection.

Its subcellular location is the secreted. In terms of biological role, secreted effector that suppresses host plant glucan elicitor-mediated defense responses. Targets host endoglucanases and inhibits the endoglucanase-mediated release of elicitor-active glucan oligosaccharides from P.infestans cell walls. The chain is Glucanase inhibitor protein 1 from Phytophthora infestans (Potato late blight agent).